A 558-amino-acid polypeptide reads, in one-letter code: Formate--tetrahydrofolate ligase (558 aa).

An ATP-binding site is contributed by 67 to 74 (TPAGEGKT).

This sequence belongs to the formate--tetrahydrofolate ligase family.

The enzyme catalyses (6S)-5,6,7,8-tetrahydrofolate + formate + ATP = (6R)-10-formyltetrahydrofolate + ADP + phosphate. It functions in the pathway one-carbon metabolism; tetrahydrofolate interconversion. The sequence is that of Formate--tetrahydrofolate ligase from Roseobacter denitrificans (strain ATCC 33942 / OCh 114) (Erythrobacter sp. (strain OCh 114)).